A 340-amino-acid chain; its full sequence is Deubiquitinase SseL (340 aa).

The active site involves His223. Catalysis depends on Cys285, which acts as the Nucleophile.

The protein belongs to the peptidase C79 family.

It is found in the secreted. Its subcellular location is the host cytoplasm. In terms of biological role, effector proteins function to alter host cell physiology and promote bacterial survival in host tissues. This protease targets the host cell ubiquitin pathway by acting as a deubiquitinase in infected host cells. Specifically hydrolyzes mono- and polyubiquitin substrates in vitro with a preference for 'Lys-63'-linked ubiquitin chains, suggesting that it interferes with a signaling pathway rather than inhibiting proteasomal-dependent degradation of its targets. Does not possess desumoylating activity. Is required for the Salmonella-induced delayed cytotoxicity in macrophages and full virulence. Is not required for intracellular bacterial replication. The protein is Deubiquitinase SseL (sseL) of Salmonella typhimurium (strain LT2 / SGSC1412 / ATCC 700720).